Here is a 259-residue protein sequence, read N- to C-terminus: Pimeloyl-[acyl-carrier protein] methyl ester esterase (259 aa).

Residues Trp-18, 78 to 79, and 139 to 143 contribute to the substrate site; these read SL and FLALD. Ser-78 serves as the catalytic Nucleophile. Residues Asp-203 and His-231 contribute to the active site. Position 231 (His-231) interacts with substrate.

The protein belongs to the AB hydrolase superfamily. Carboxylesterase BioH family. In terms of assembly, monomer.

The protein resides in the cytoplasm. The enzyme catalyses 6-carboxyhexanoyl-[ACP] methyl ester + H2O = 6-carboxyhexanoyl-[ACP] + methanol + H(+). The protein operates within cofactor biosynthesis; biotin biosynthesis. Its function is as follows. The physiological role of BioH is to remove the methyl group introduced by BioC when the pimeloyl moiety is complete. It allows to synthesize pimeloyl-ACP via the fatty acid synthetic pathway through the hydrolysis of the ester bonds of pimeloyl-ACP esters. The sequence is that of Pimeloyl-[acyl-carrier protein] methyl ester esterase from Stenotrophomonas maltophilia (strain R551-3).